The following is a 424-amino-acid chain: UPF0229 protein PFL_5654 (424 aa).

The segment at 85-108 (GEHIARPQGGGGGGGGRGKAGNSG) is disordered. The span at 92–108 (QGGGGGGGGRGKAGNSG) shows a compositional bias: gly residues.

The protein belongs to the UPF0229 family.

In Pseudomonas fluorescens (strain ATCC BAA-477 / NRRL B-23932 / Pf-5), this protein is UPF0229 protein PFL_5654.